The chain runs to 77 residues: Conotoxin Ar5.1 a (77 aa).

The first 19 residues, 1–19 (MLCLPVFIILLLLASPAAS), serve as a signal peptide directing secretion. A propeptide spanning residues 20-44 (NPLETRIQSDLIRAALEDADMKNEK) is cleaved from the precursor.

The protein belongs to the conotoxin T superfamily. In terms of processing, contains 2 disulfide bonds that can be either 'C1-C3, C2-C4' or 'C1-C4, C2-C3', since these disulfide connectivities have been observed for conotoxins with cysteine framework V (for examples, see AC P0DQQ7 and AC P81755). Expressed by the venom duct.

The protein localises to the secreted. The polypeptide is Conotoxin Ar5.1 a (Conus arenatus (Sand-dusted cone)).